A 295-amino-acid chain; its full sequence is MPFPPMPPPPAPAPGAQAARQLPRRPCAAGDKKKRPPQRPEGLLSSSWPSATLKRPPARRGPGLDRTQPPAPPGVSPQALPSRARAPATCAPPRPAGSGHSPARTTYAATSAGTGTTAAGTSSGAGPCPDSAARFCLNLTPEAVLVIQKRHLEKQLLARPRRPFPSPSAEPRRLLAPCLPARAAGPRRGGPASDPDAPPTAGQGRRAPPPGAQLLHGGLQVPQLSPRPGALRPMLKVSLLNERHRYDDVEYEEEPEAVDEGLVRKCTEWLRGVESAAAARGRAGALDSRRHLSTL.

The span at 1–13 (MPFPPMPPPPAPA) shows a compositional bias: pro residues. The disordered stretch occupies residues 1–133 (MPFPPMPPPP…GAGPCPDSAA (133 aa)). Over residues 14-29 (PGAQAARQLPRRPCAA) the composition is skewed to low complexity. Ser-47 carries the post-translational modification Phosphoserine. Residue Arg-83 is modified to Omega-N-methylarginine. Positions 103–126 (ARTTYAATSAGTGTTAAGTSSGAG) are enriched in low complexity. Residue Arg-172 is modified to Asymmetric dimethylarginine. Low complexity predominate over residues 181-192 (ARAAGPRRGGPA). Residues 181–227 (ARAAGPRRGGPASDPDAPPTAGQGRRAPPPGAQLLHGGLQVPQLSPR) are disordered. Arg-188 is modified (omega-N-methylarginine).

The sequence is that of Proline-rich protein 18 (PRR18) from Homo sapiens (Human).